The primary structure comprises 283 residues: MASLREIQMRINSTKSTKQITKAMNMVSASKLNRAQAHSAKFQPYMLKMQEVLGTIANGTTGASHPMLEKRPVKKTGYIVITSDRGLAGAYNANVLREVYREINEKHTTDSYVLFVVGKVGVQFFRSRGITVTDAITGLNDSPSYVDVAEIVKRTVSAFTLGEIDELKLCYNHFMSVISQEVKVETLLPLGEIEASSSTTYEYEPSEEQILAELLPRYAESLIFGALLDAKVAEHASRMTAMQSATDNADDLIGRLTLVYNRARQAAITQEITEIVSGAAAQQ.

The protein belongs to the ATPase gamma chain family. F-type ATPases have 2 components, CF(1) - the catalytic core - and CF(0) - the membrane proton channel. CF(1) has five subunits: alpha(3), beta(3), gamma(1), delta(1), epsilon(1). CF(0) has three main subunits: a, b and c.

It localises to the cell membrane. In terms of biological role, produces ATP from ADP in the presence of a proton gradient across the membrane. The gamma chain is believed to be important in regulating ATPase activity and the flow of protons through the CF(0) complex. This chain is ATP synthase gamma chain, found in Exiguobacterium sibiricum (strain DSM 17290 / CCUG 55495 / CIP 109462 / JCM 13490 / 255-15).